The primary structure comprises 429 residues: Arsenical pump membrane protein (429 aa).

Helical transmembrane passes span I24–A44, I46–I66, I98–L118, I121–M141, V178–F198, W228–V248, S249–I269, V274–Y294, G316–M335, and I407–V427.

The protein resides in the cell inner membrane. Involved in arsenical resistance. Thought to form the channel of an arsenite pump. In Escherichia coli, this protein is Arsenical pump membrane protein (arsB).